A 239-amino-acid chain; its full sequence is Tetraspanin-9 (239 aa).

At 1-13 the chain is on the cytoplasmic side; it reads MARGCLCCLKYMM. A helical membrane pass occupies residues 14 to 34; that stretch reads FLFNLIFWLCGCGLLGVGIWL. At 35 to 55 the chain is on the extracellular side; sequence SVSQGNFATFSPSFPSLSAAN. A helical membrane pass occupies residues 56-76; the sequence is LVIAIGTIVMVTGFLGCLGAI. The Cytoplasmic segment spans residues 77 to 85; the sequence is KENKCLLLS. Residues 86 to 106 form a helical membrane-spanning segment; the sequence is FFIVLLVILLAELILLILFFV. Topologically, residues 107 to 203 are extracellular; sequence YMDKVNENAK…VKMWFDDNKH (97 aa). N-linked (GlcNAc...) asparagine glycosylation occurs at asparagine 180. Residues 204–224 traverse the membrane as a helical segment; the sequence is VLGTVGMCILIMQILGMAFSM. Topologically, residues 225-239 are cytoplasmic; it reads TLFQHIHRTGKKYDA.

This sequence belongs to the tetraspanin (TM4SF) family. In terms of assembly, found in a complex with GP6. In terms of processing, glycosylated. As to expression, expressed in megakaryocytes and platelets (at protein level).

The protein resides in the membrane. The chain is Tetraspanin-9 (TSPAN9) from Homo sapiens (Human).